The chain runs to 290 residues: Acetyl-coenzyme A carboxylase carboxyl transferase subunit beta (290 aa).

In terms of domain architecture, CoA carboxyltransferase N-terminal spans 28–290 (LMNKCSKCGT…TVREGLSHGG (263 aa)). Zn(2+) is bound by residues C32, C35, C51, and C54. The C4-type zinc-finger motif lies at 32 to 54 (CSKCGTIQYSKELDKNLKVCSSC).

It belongs to the AccD/PCCB family. Acetyl-CoA carboxylase is a heterohexamer composed of biotin carboxyl carrier protein (AccB), biotin carboxylase (AccC) and two subunits each of ACCase subunit alpha (AccA) and ACCase subunit beta (AccD). Zn(2+) is required as a cofactor.

It localises to the cytoplasm. It carries out the reaction N(6)-carboxybiotinyl-L-lysyl-[protein] + acetyl-CoA = N(6)-biotinyl-L-lysyl-[protein] + malonyl-CoA. It participates in lipid metabolism; malonyl-CoA biosynthesis; malonyl-CoA from acetyl-CoA: step 1/1. Component of the acetyl coenzyme A carboxylase (ACC) complex. Biotin carboxylase (BC) catalyzes the carboxylation of biotin on its carrier protein (BCCP) and then the CO(2) group is transferred by the transcarboxylase to acetyl-CoA to form malonyl-CoA. The protein is Acetyl-coenzyme A carboxylase carboxyl transferase subunit beta of Paenibacillus sp. (strain JDR-2).